Here is a 177-residue protein sequence, read N- to C-terminus: Nucleoside triphosphate/diphosphate phosphatase (177 aa).

Arg-23 functions as the Proton donor in the catalytic mechanism. Positions 87, 103, 105, 107, 120, and 123 each coordinate Mg(2+).

The protein belongs to the Ntdp family. Requires Mg(2+) as cofactor.

It catalyses the reaction a ribonucleoside 5'-triphosphate + H2O = a ribonucleoside 5'-diphosphate + phosphate + H(+). It carries out the reaction a ribonucleoside 5'-diphosphate + H2O = a ribonucleoside 5'-phosphate + phosphate + H(+). Its function is as follows. Has nucleoside phosphatase activity towards nucleoside triphosphates and nucleoside diphosphates. The protein is Nucleoside triphosphate/diphosphate phosphatase of Streptococcus pneumoniae (strain ATCC 700669 / Spain 23F-1).